A 143-amino-acid chain; its full sequence is Glutamyl-tRNA(Gln) amidotransferase subunit C, chloroplastic/mitochondrial (143 aa).

This sequence belongs to the GatC family. Subunit of the heterotrimeric GatCAB amidotransferase (AdT) complex, composed of A, B and C subunits.

Its subcellular location is the mitochondrion. It localises to the plastid. The protein localises to the chloroplast. It catalyses the reaction L-glutamyl-tRNA(Gln) + L-glutamine + ATP + H2O = L-glutaminyl-tRNA(Gln) + L-glutamate + ADP + phosphate + H(+). Functionally, allows the formation of correctly charged Gln-tRNA(Gln) through the transamidation of misacylated Glu-tRNA(Gln) in chloroplasts and mitochondria. The reaction takes place in the presence of glutamine and ATP through an activated gamma-phospho-Glu-tRNA(Gln). The chain is Glutamyl-tRNA(Gln) amidotransferase subunit C, chloroplastic/mitochondrial from Ricinus communis (Castor bean).